A 157-amino-acid chain; its full sequence is 6,7-dimethyl-8-ribityllumazine synthase 1 (157 aa).

Residues Phe22, 53–55 (ALE), and 82–84 (TVI) contribute to the 5-amino-6-(D-ribitylamino)uracil site. Residue 87-88 (ET) coordinates (2S)-2-hydroxy-3-oxobutyl phosphate. His90 functions as the Proton donor in the catalytic mechanism. Residue Asn115 coordinates 5-amino-6-(D-ribitylamino)uracil. Position 129 (His129) interacts with (2S)-2-hydroxy-3-oxobutyl phosphate.

The protein belongs to the DMRL synthase family. As to quaternary structure, homopentamer.

The enzyme catalyses (2S)-2-hydroxy-3-oxobutyl phosphate + 5-amino-6-(D-ribitylamino)uracil = 6,7-dimethyl-8-(1-D-ribityl)lumazine + phosphate + 2 H2O + H(+). It participates in cofactor biosynthesis; riboflavin biosynthesis; riboflavin from 2-hydroxy-3-oxobutyl phosphate and 5-amino-6-(D-ribitylamino)uracil: step 1/2. In terms of biological role, catalyzes the formation of 6,7-dimethyl-8-ribityllumazine by condensation of 5-amino-6-(D-ribitylamino)uracil with 3,4-dihydroxy-2-butanone 4-phosphate. This is the penultimate step in the biosynthesis of riboflavin. The sequence is that of 6,7-dimethyl-8-ribityllumazine synthase 1 (ribH1) from Brucella abortus (strain 2308).